The following is a 369-amino-acid chain: Flagellar P-ring protein (369 aa).

The first 23 residues, 1 to 23, serve as a signal peptide directing secretion; that stretch reads MRSLLRWMGVLLLCGLCAAPAQA.

Belongs to the FlgI family. As to quaternary structure, the basal body constitutes a major portion of the flagellar organelle and consists of four rings (L,P,S, and M) mounted on a central rod.

Its subcellular location is the periplasm. It localises to the bacterial flagellum basal body. Its function is as follows. Assembles around the rod to form the L-ring and probably protects the motor/basal body from shearing forces during rotation. This chain is Flagellar P-ring protein, found in Chromohalobacter salexigens (strain ATCC BAA-138 / DSM 3043 / CIP 106854 / NCIMB 13768 / 1H11).